A 232-amino-acid chain; its full sequence is Small heat shock protein, chloroplastic (232 aa).

Polar residues predominate over residues 1–25; it reads MAQSVSLSTIASPILSQKPGSSVKS. 2 disordered regions span residues 1 to 35 and 48 to 81; these read MAQSVSLSTIASPILSQKPGSSVKSTPPCMASFPL and RAQAGGDGDNKDNSVEVHRVNKDDQGTAVERKPR. The transit peptide at 1 to 46 directs the protein to the chloroplast; that stretch reads MAQSVSLSTIASPILSQKPGSSVKSTPPCMASFPLRRQLPRLGLRN. Basic and acidic residues predominate over residues 55–78; it reads GDNKDNSVEVHRVNKDDQGTAVER. In terms of domain architecture, sHSP spans 124 to 232; that stretch reads IGGGEIRVPW…ERTVIDVQIQ (109 aa).

Belongs to the small heat shock protein (HSP20) family.

It localises to the plastid. The protein resides in the chloroplast. This is Small heat shock protein, chloroplastic (HSP21) from Pisum sativum (Garden pea).